Here is a 296-residue protein sequence, read N- to C-terminus: Cobalamin trafficking protein CblD (296 aa).

The transit peptide at 1 to 38 directs the protein to the mitochondrion; it reads MAHVLCNRARLVSYLPGFCSLVKRVINPRAFSTAGSSG. An N6-acetyllysine modification is found at K203.

As to quaternary structure, heterodimer with MMACHC. Forms a multiprotein complex with MMACHC, MTR and MTRR.

The protein localises to the cytoplasm. The protein resides in the mitochondrion. Its function is as follows. Involved in cobalamin metabolism and trafficking. Plays a role in regulating the biosynthesis and the proportion of two coenzymes, methylcob(III)alamin (MeCbl) and 5'-deoxyadenosylcobalamin (AdoCbl). Promotes oxidation of cob(II)alamin bound to MMACHC. The processing of cobalamin in the cytosol occurs in a multiprotein complex composed of at least MMACHC, MMADHC, MTRR (methionine synthase reductase) and MTR (methionine synthase) which may contribute to shuttle safely and efficiently cobalamin towards MTR in order to produce methionine. The protein is Cobalamin trafficking protein CblD of Mus musculus (Mouse).